Consider the following 542-residue polypeptide: CTP synthase (542 aa).

The segment at 1–265 (MTAFIFITGG…GRMLTELLKV (265 aa)) is amidoligase domain. A CTP-binding site is contributed by Ser-13. Ser-13 contacts UTP. 14-19 (SVGKGI) serves as a coordination point for ATP. Tyr-54 is a binding site for L-glutamine. Asp-71 serves as a coordination point for ATP. Positions 71 and 140 each coordinate Mg(2+). Residues 147–149 (DYE), 186–191 (KTKPLQ), and Lys-222 each bind CTP. UTP is bound by residues 186–191 (KTKPLQ) and Lys-222. One can recognise a Glutamine amidotransferase type-1 domain in the interval 297–532 (YVKLRDAYIS…LKAALARKMG (236 aa)). Gly-352 contacts L-glutamine. The active-site Nucleophile; for glutamine hydrolysis is the Cys-379. L-glutamine is bound by residues 380–383 (YGMQ), Glu-403, and Arg-460. Active-site residues include His-505 and Glu-507.

It belongs to the CTP synthase family. In terms of assembly, homotetramer.

It catalyses the reaction UTP + L-glutamine + ATP + H2O = CTP + L-glutamate + ADP + phosphate + 2 H(+). The catalysed reaction is L-glutamine + H2O = L-glutamate + NH4(+). It carries out the reaction UTP + NH4(+) + ATP = CTP + ADP + phosphate + 2 H(+). The protein operates within pyrimidine metabolism; CTP biosynthesis via de novo pathway; CTP from UDP: step 2/2. With respect to regulation, allosterically activated by GTP, when glutamine is the substrate; GTP has no effect on the reaction when ammonia is the substrate. The allosteric effector GTP functions by stabilizing the protein conformation that binds the tetrahedral intermediate(s) formed during glutamine hydrolysis. Inhibited by the product CTP, via allosteric rather than competitive inhibition. In terms of biological role, catalyzes the ATP-dependent amination of UTP to CTP with either L-glutamine or ammonia as the source of nitrogen. Regulates intracellular CTP levels through interactions with the four ribonucleotide triphosphates. This is CTP synthase from Caldivirga maquilingensis (strain ATCC 700844 / DSM 13496 / JCM 10307 / IC-167).